The chain runs to 139 residues: Ribonuclease VapC3 (139 aa).

Residues 14–121 (EAIVLDTGAF…VATDDYTLQR (108 aa)) form the PINc domain. Asp19 serves as a coordination point for Mg(2+).

It belongs to the PINc/VapC protein family. It depends on Mg(2+) as a cofactor.

Toxic component of a type II toxin-antitoxin (TA) system. An RNase. The sequence is that of Ribonuclease VapC3 from Aeropyrum pernix (strain ATCC 700893 / DSM 11879 / JCM 9820 / NBRC 100138 / K1).